Consider the following 345-residue polypeptide: MAEACGVRRMKLGSQGLEVSAQGLGCMGLSAFYGAPKPENEAIALIHHAIHSGVTLLDTSDIYGPETNEVLLGKALKDGVREKVELATKFGISYAEGKREVRGDPEYVRAACEASLKRLDIACIDLYYQHRVDTRVPIEITMGELKKLVEEGKIKYIGLSEASASTIRRAHAVHPITAVQIEWSLWTRDVEEEIIPTCRELGIGIVAYSPLGRGFFASGPKLVENLEKDDFRKALPRFQEENLDHNKIVYEKVCAISEKKGCTPGQLALAWVHHQGDDVCPIPGTTKIENLKQNIGALSVKLTPEEMTELEAIAQPGFVKGDRYSNMIPTFKNAETPPLSAWKAA.

The active-site Proton donor is Tyr63. His130 lines the substrate pocket. NADP(+) is bound at residue 209–219 (SPLGRGFFASG).

The protein belongs to the aldo/keto reductase family.

The sequence is that of Probable aldo-keto reductase 4 from Arabidopsis thaliana (Mouse-ear cress).